The primary structure comprises 379 residues: Class V chitinase CHIT5b (379 aa).

Residues 1 to 26 (MANILNLKHLLTLALILLALATKSST) form the signal peptide. In terms of domain architecture, GH18 spans 34-379 (RVKGIYWLEN…TQASKAWKLV (346 aa)). N-linked (GlcNAc...) asparagine glycosylation is found at Asn-68, Asn-109, and Asn-128. Glu-147 functions as the Proton donor in the catalytic mechanism. N-linked (GlcNAc...) asparagine glycans are attached at residues Asn-192, Asn-227, and Asn-241.

The protein belongs to the glycosyl hydrolase 18 family. Chitinase class V subfamily.

The enzyme catalyses Random endo-hydrolysis of N-acetyl-beta-D-glucosaminide (1-&gt;4)-beta-linkages in chitin and chitodextrins.. It functions in the pathway glycan degradation; chitin degradation. Functionally, possesses chitinase activity in vitro toward glycol chitin, carboxymethyl-chitin, colloidal chitin, and the chitin oligosaccharides (N-acetylglucosamine) (GlcNAc)6 and (GlcNAc)5. Hydrolyzes (GlcNAc)6 into (GlcNAc)4 and (GlcNAc)2, or two (GlcNAc)3 molecules. Has the capacity to reduce hyphal growth of the fungus Trichoderma viride in an agar-plate bioassay. The sequence is that of Class V chitinase CHIT5b from Medicago truncatula (Barrel medic).